The primary structure comprises 124 residues: Bactoprenol-linked glucose translocase (124 aa).

4 helical membrane passes run 12–32 (FFSY…VFYA), 45–65 (NIVG…RCSF), 75–95 (FIFI…FDLL), and 96–116 (ALSP…LGYC).

Belongs to the GtrA family.

The protein localises to the cell membrane. The protein operates within bacterial outer membrane biogenesis; lipopolysaccharide biosynthesis. In terms of biological role, involved in O antigen modification. Involved in the translocation of bactoprenol-linked glucose across the cytoplasmic membrane. The polypeptide is Bactoprenol-linked glucose translocase (rfbI) (Shigella flexneri).